The following is a 390-amino-acid chain: Putative 2-isopropylmalate synthase (390 aa).

In terms of domain architecture, Pyruvate carboxyltransferase spans 5–267 (IIIFDTTLRD…KTNIKYQEIY (263 aa)). Residues D14, H202, H204, and N238 each contribute to the Mn(2+) site.

This sequence belongs to the alpha-IPM synthase/homocitrate synthase family. LeuA type 1 subfamily. In terms of assembly, homodimer. It depends on Mn(2+) as a cofactor.

The protein resides in the cytoplasm. It catalyses the reaction 3-methyl-2-oxobutanoate + acetyl-CoA + H2O = (2S)-2-isopropylmalate + CoA + H(+). The protein operates within amino-acid biosynthesis; L-leucine biosynthesis; L-leucine from 3-methyl-2-oxobutanoate: step 1/4. Functionally, catalyzes the condensation of the acetyl group of acetyl-CoA with 3-methyl-2-oxobutanoate (2-ketoisovalerate) to form 3-carboxy-3-hydroxy-4-methylpentanoate (2-isopropylmalate). This is Putative 2-isopropylmalate synthase from Buchnera aphidicola subsp. Baizongia pistaciae (strain Bp).